The sequence spans 227 residues: Probable maleylacetoacetate isomerase 2 (227 aa).

The region spanning 14-97 (IQPILYSYWR…YLEETRPQRP (84 aa)) is the GST N-terminal domain. Residues 24–29 (SSCSWR), Gln-55, Val-69, 81–82 (ES), Gln-121, and 125–127 (NLI) each bind glutathione. A GST C-terminal domain is found at 102-222 (DVHKRAKVRE…HPSNQPDCPP (121 aa)).

Belongs to the GST superfamily. Zeta family. Requires glutathione as cofactor.

Its subcellular location is the cytoplasm. The enzyme catalyses 4-maleylacetoacetate = 4-fumarylacetoacetate. It catalyses the reaction RX + glutathione = an S-substituted glutathione + a halide anion + H(+). Its pathway is amino-acid degradation; L-phenylalanine degradation; acetoacetate and fumarate from L-phenylalanine: step 5/6. Catalyzes the glutathione dependent oxygenation of dichloroacetic acid to glyoxylic acid in vitro. Has no glutathione thioltransferase activity with 4-hydroxynonenal (4-HNE), adrenochrome, phenethyl isothiocyanate (PEITC), 5-hydroperoxyeicosatetraenoic acid ((5S)-HpETE), prostaglandin A2 (PGA2) or 2-hydroxyethyldisulfide (HED). The sequence is that of Probable maleylacetoacetate isomerase 2 (GstZ2) from Drosophila melanogaster (Fruit fly).